The chain runs to 143 residues: Actin-depolymerizing factor 5 (143 aa).

One can recognise an ADF-H domain in the interval 11–143; the sequence is GMRVTDECTS…GFDIIQDRAK (133 aa).

The protein belongs to the actin-binding proteins ADF family. In terms of tissue distribution, expressed exclusively in root tip meristem.

The protein resides in the cytoplasm. It localises to the cytoskeleton. In terms of biological role, actin-depolymerizing protein. Severs actin filaments (F-actin) and binds to actin monomers. The sequence is that of Actin-depolymerizing factor 5 (ADF5) from Arabidopsis thaliana (Mouse-ear cress).